Here is a 196-residue protein sequence, read N- to C-terminus: Holliday junction branch migration complex subunit RuvA (196 aa).

Residues 1–63 (MINKIYGKVI…ENELKLFGFL (63 aa)) are domain I. Positions 64–139 (NSDERETFKS…KLLINNELES (76 aa)) are domain II. Residue Ser-139 is a region of interest, flexible linker. A domain III region spans residues 139 to 196 (SSLFRFKELEESIVSMGFDRKIVNSKLKEAFNLVEFSNLKDSEKEQFLFKEVLKRMSN).

It belongs to the RuvA family. Homotetramer. Forms an RuvA(8)-RuvB(12)-Holliday junction (HJ) complex. HJ DNA is sandwiched between 2 RuvA tetramers; dsDNA enters through RuvA and exits via RuvB. An RuvB hexamer assembles on each DNA strand where it exits the tetramer. Each RuvB hexamer is contacted by two RuvA subunits (via domain III) on 2 adjacent RuvB subunits; this complex drives branch migration. In the full resolvosome a probable DNA-RuvA(4)-RuvB(12)-RuvC(2) complex forms which resolves the HJ.

It is found in the cytoplasm. In terms of biological role, the RuvA-RuvB-RuvC complex processes Holliday junction (HJ) DNA during genetic recombination and DNA repair, while the RuvA-RuvB complex plays an important role in the rescue of blocked DNA replication forks via replication fork reversal (RFR). RuvA specifically binds to HJ cruciform DNA, conferring on it an open structure. The RuvB hexamer acts as an ATP-dependent pump, pulling dsDNA into and through the RuvAB complex. HJ branch migration allows RuvC to scan DNA until it finds its consensus sequence, where it cleaves and resolves the cruciform DNA. This chain is Holliday junction branch migration complex subunit RuvA, found in Borreliella afzelii (strain PKo) (Borrelia afzelii).